Here is a 652-residue protein sequence, read N- to C-terminus: Chaperone protein HtpG (652 aa).

The interval 1 to 351 (MTEHVEQLEF…AQDLSLNVSR (351 aa)) is a; substrate-binding. The b stretch occupies residues 352 to 568 (EILQQDRQIQ…VFDFTPMLER (217 aa)). The c stretch occupies residues 569 to 652 (MYRASGQPVP…ILTDRLTRTL (84 aa)).

Belongs to the heat shock protein 90 family. Homodimer.

It localises to the cytoplasm. In terms of biological role, molecular chaperone. Has ATPase activity. The protein is Chaperone protein HtpG of Nocardia farcinica (strain IFM 10152).